We begin with the raw amino-acid sequence, 1956 residues long: Probable cation-transporting ATPase 1 (1956 aa).

Residues 1 to 35 (MHLMCTGLRNEKLINDRKILYGECNLNIKSDSFII) lie on the Cytoplasmic side of the membrane. Residues 36–58 (LLFKEIMNPFFIFQIFAMIVWSL) form a helical membrane-spanning segment. Residues 59–61 (DNY) lie on the Extracellular side of the membrane. A helical membrane pass occupies residues 62–80 (IEYTISILFITSISIILEL). Topologically, residues 81 to 407 (KNTIKNQKKI…KKELNLINDS (327 aa)) are cytoplasmic. The helical transmembrane segment at 408 to 427 (YKFLIILIIYALFSVFILLY) threads the bilayer. Residues 428-440 (ITLSNNEYTNHII) are Extracellular-facing. A helical transmembrane segment spans residues 441–462 (IKCLDIITDAIPPALPTTLTVG). Residues 463-1818 (ISIAISRLKK…SLVNSFQLFK (1356 aa)) lie on the Cytoplasmic side of the membrane. Residue aspartate 496 is the 4-aspartylphosphate intermediate of the active site. Residues 901–938 (YGNNNDDNNDDDNNNDDDNNDDNNNDDNNNDDNNDDNN) form a disordered region. Acidic residues predominate over residues 907-935 (DNNDDDNNNDDDNNDDNNNDDNNNDDNND). Mg(2+) contacts are provided by aspartate 1760 and aspartate 1764. Residues 1819-1837 (FISLYSIMQCSQVLILYSI) traverse the membrane as a helical segment. At 1838-1845 (SNKLTDNQ) the chain is on the extracellular side. Residues 1846 to 1863 (YIFIDIVTILPLSIFMCW) form a helical membrane-spanning segment. Over 1864 to 1881 (TSASEKLSKNIPIGKLFS) the chain is Cytoplasmic. Residues 1882 to 1905 (FPILISIYGQIIIQLFFVMISLVV) form a helical membrane-spanning segment. Residues 1906–1928 (LMNLSFYKYDKNKVMKEKSDDTY) are Extracellular-facing. A helical transmembrane segment spans residues 1929-1952 (LYKAQKYTLIYSLLFSKFVYVYIF). Residues 1953–1956 (KYKE) lie on the Cytoplasmic side of the membrane.

Belongs to the cation transport ATPase (P-type) (TC 3.A.3) family. Type V subfamily.

The protein localises to the membrane. The catalysed reaction is ATP + H2O = ADP + phosphate + H(+). This is Probable cation-transporting ATPase 1 from Plasmodium falciparum.